A 370-amino-acid chain; its full sequence is MRVKEQLLTLRAYVPGKNIEEVKREYGLSKIVKLASNENPFGCSARVTEALTSLASQYALYPDGYAFELRTKVAEHLGVKAEQLLFGSGLDEVIQMISRALLHEGTNVVMANPTFSQYHHHAVIEGAKVREVPLKDGIHDLDAMLEQVDDKTKIVWICNPNNPTGTYVEKQKLLSFLESVPKSALVIMDEAYYEYAGAEDYPQTLPLLEKYGNLMILRTFSKAYGLAAFRIGYAVGNEQLIGQLEVARLPFNTSTVAQSVALAALEDQAFLQECVKKNEEGLHQYYAFCKEYNVFYYPSQTNFIFLKLGIPGNEAFERLMKKGYIVRSGAAFGIHDGIRITVGLKEENDEIIELLKELVNEQVKKEETYS.

N6-(pyridoxal phosphate)lysine is present on K222.

It belongs to the class-II pyridoxal-phosphate-dependent aminotransferase family. Histidinol-phosphate aminotransferase subfamily. As to quaternary structure, homodimer. Pyridoxal 5'-phosphate serves as cofactor.

It carries out the reaction L-histidinol phosphate + 2-oxoglutarate = 3-(imidazol-4-yl)-2-oxopropyl phosphate + L-glutamate. The protein operates within amino-acid biosynthesis; L-histidine biosynthesis; L-histidine from 5-phospho-alpha-D-ribose 1-diphosphate: step 7/9. This is Histidinol-phosphate aminotransferase 1 from Bacillus cereus (strain ATCC 10987 / NRS 248).